The sequence spans 132 residues: Myelin P2 protein (132 aa).

Residue Ser2 is modified to N-acetylserine. Residues Arg107 and 127 to 129 (RIY) each bind (9Z)-octadecenoate. Hexadecanoate is bound by residues Arg107 and 127-129 (RIY).

This sequence belongs to the calycin superfamily. Fatty-acid binding protein (FABP) family. As to quaternary structure, monomer.

The protein resides in the cytoplasm. May play a role in lipid transport protein in Schwann cells. May bind cholesterol. In Mus musculus (Mouse), this protein is Myelin P2 protein (Pmp2).